A 571-amino-acid chain; its full sequence is Proline--tRNA ligase (571 aa).

This sequence belongs to the class-II aminoacyl-tRNA synthetase family. ProS type 1 subfamily. Homodimer.

The protein localises to the cytoplasm. The enzyme catalyses tRNA(Pro) + L-proline + ATP = L-prolyl-tRNA(Pro) + AMP + diphosphate. Its function is as follows. Catalyzes the attachment of proline to tRNA(Pro) in a two-step reaction: proline is first activated by ATP to form Pro-AMP and then transferred to the acceptor end of tRNA(Pro). As ProRS can inadvertently accommodate and process non-cognate amino acids such as alanine and cysteine, to avoid such errors it has two additional distinct editing activities against alanine. One activity is designated as 'pretransfer' editing and involves the tRNA(Pro)-independent hydrolysis of activated Ala-AMP. The other activity is designated 'posttransfer' editing and involves deacylation of mischarged Ala-tRNA(Pro). The misacylated Cys-tRNA(Pro) is not edited by ProRS. This Vibrio campbellii (strain ATCC BAA-1116) protein is Proline--tRNA ligase.